We begin with the raw amino-acid sequence, 515 residues long: Probable malate:quinone oxidoreductase (515 aa).

This sequence belongs to the MQO family. It depends on FAD as a cofactor.

It catalyses the reaction (S)-malate + a quinone = a quinol + oxaloacetate. Its pathway is carbohydrate metabolism; tricarboxylic acid cycle; oxaloacetate from (S)-malate (quinone route): step 1/1. In Blochmanniella pennsylvanica (strain BPEN), this protein is Probable malate:quinone oxidoreductase.